The chain runs to 94 residues: MGRSLKKGPYCDPKLLKKIEELNAKGEKRVIKTWSRRSTIFPQMVGHTIAVYDGRKHVPVYITEEMVGHKLGEFAPTRTFRGHGDHTERSTALK.

The protein belongs to the universal ribosomal protein uS19 family.

Its function is as follows. Protein S19 forms a complex with S13 that binds strongly to the 16S ribosomal RNA. The protein is Small ribosomal subunit protein uS19 of Carboxydothermus hydrogenoformans (strain ATCC BAA-161 / DSM 6008 / Z-2901).